The sequence spans 208 residues: Probable DNA-3-methyladenine glycosylase (208 aa).

The protein belongs to the DNA glycosylase MPG family.

Its subcellular location is the nucleus. The catalysed reaction is Hydrolysis of alkylated DNA, releasing 3-methyladenine, 3-methylguanine, 7-methylguanine and 7-methyladenine.. Its function is as follows. Hydrolysis of the deoxyribose N-glycosidic bond to excise 3-methyladenine, and 7-methylguanine from the damaged DNA polymer formed by alkylation lesions. The polypeptide is Probable DNA-3-methyladenine glycosylase (Encephalitozoon cuniculi (strain GB-M1) (Microsporidian parasite)).